A 246-amino-acid polypeptide reads, in one-letter code: MKSTFLFALFVLFLAASEAATDYPTNPPTTPPTPAPTSTPLPSSAASPELVAQLLNAPSELDRIKLLKDNQFVFDFKNSKLGVTQGTGGKTVATSRTNFPAVIGHNVAMTVGFIEACGINLPHTHPRATEINFIASGKFEAGFFLENQAKFIGHTLEAGMATVFPQGAIHFEINMNCEPAMFVAAFNNEDPGVQTTASSFFGLPADVVGVSLNISSIQTVEDLGKHLPQNPAVAMQACMKRCGFSD.

The N-terminal stretch at 1–19 is a signal peptide; the sequence is MKSTFLFALFVLFLAASEA. Residues 23–45 form a disordered region; it reads YPTNPPTTPPTPAPTSTPLPSSA. Pro residues predominate over residues 25–39; the sequence is TNPPTTPPTPAPTST. In terms of domain architecture, Cupin type-1 spans 74–220; it reads FDFKNSKLGV…SLNISSIQTV (147 aa). Positions 123, 125, 130, and 170 each coordinate Mn(2+). Residue Asn-213 is glycosylated (N-linked (GlcNAc...) asparagine).

It belongs to the germin family.

It is found in the secreted. Its subcellular location is the cell wall. In Physarum polycephalum (Slime mold), this protein is Spherulin-1A.